The following is an 83-amino-acid chain: Kappa-ctenitoxin-Pn1a (83 aa).

The N-terminal stretch at M1–A21 is a signal peptide. A propeptide spanning residues E22–R37 is cleaved from the precursor. Disulfide bonds link C40-C55, C47-C60, C54-C71, and C62-C69. The propeptide occupies L78–K83.

The protein belongs to the neurotoxin 02 (plectoxin) family. Expressed by the venom gland.

It is found in the secreted. In terms of biological role, antagonist of L-type calcium channels (Cav1/CACNA1). In GH3 neuroendocrinal cell line, it reversibly inhibits the A-type potassium current but does not block other potassium currents or calcium channels. Shows an important acetylcholine-mediated antiarrhythmogenic effect in isolated hearts. In vivo, causes paralysis in the posterior limbs and gradual decreases in movement and aggression during 24 hours at dose levels of 5 ug per mouse. The sequence is that of Kappa-ctenitoxin-Pn1a from Phoneutria nigriventer (Brazilian armed spider).